The following is a 390-amino-acid chain: D-alanyl-D-alanine carboxypeptidase DacD (390 aa).

Positions 1-23 (MLLKRRLFIAASLFAMHLSPALA) are cleaved as a signal peptide. Catalysis depends on S65, which acts as the Acyl-ester intermediate. K68 serves as the catalytic Proton acceptor. S131 is a catalytic residue. A substrate-binding site is contributed by K234.

It belongs to the peptidase S11 family.

It is found in the cell inner membrane. It catalyses the reaction Preferential cleavage: (Ac)2-L-Lys-D-Ala-|-D-Ala. Also transpeptidation of peptidyl-alanyl moieties that are N-acyl substituents of D-alanine.. It functions in the pathway cell wall biogenesis; peptidoglycan biosynthesis. Functionally, removes C-terminal D-alanyl residues from sugar-peptide cell wall precursors. This is D-alanyl-D-alanine carboxypeptidase DacD (dacD) from Salmonella typhimurium (strain LT2 / SGSC1412 / ATCC 700720).